The chain runs to 218 residues: Pyridoxine/pyridoxamine 5'-phosphate oxidase (218 aa).

Substrate-binding positions include 14-17 (RREY) and lysine 72. FMN-binding positions include 67–72 (RIVLLK), 82–83 (YT), arginine 88, lysine 89, and glutamine 111. Substrate is bound by residues tyrosine 129, arginine 133, and serine 137. Residues 146–147 (QS) and tryptophan 191 contribute to the FMN site. Residue 197–199 (RLH) coordinates substrate. FMN is bound at residue arginine 201.

This sequence belongs to the pyridoxamine 5'-phosphate oxidase family. As to quaternary structure, homodimer. It depends on FMN as a cofactor.

It carries out the reaction pyridoxamine 5'-phosphate + O2 + H2O = pyridoxal 5'-phosphate + H2O2 + NH4(+). The catalysed reaction is pyridoxine 5'-phosphate + O2 = pyridoxal 5'-phosphate + H2O2. The protein operates within cofactor metabolism; pyridoxal 5'-phosphate salvage; pyridoxal 5'-phosphate from pyridoxamine 5'-phosphate: step 1/1. Its pathway is cofactor metabolism; pyridoxal 5'-phosphate salvage; pyridoxal 5'-phosphate from pyridoxine 5'-phosphate: step 1/1. Its function is as follows. Catalyzes the oxidation of either pyridoxine 5'-phosphate (PNP) or pyridoxamine 5'-phosphate (PMP) into pyridoxal 5'-phosphate (PLP). The polypeptide is Pyridoxine/pyridoxamine 5'-phosphate oxidase (Escherichia coli O139:H28 (strain E24377A / ETEC)).